The sequence spans 192 residues: Nucleoside triphosphate pyrophosphatase (192 aa).

Asp-73 (proton acceptor) is an active-site residue.

It belongs to the Maf family. Requires a divalent metal cation as cofactor.

Its subcellular location is the cytoplasm. The catalysed reaction is a ribonucleoside 5'-triphosphate + H2O = a ribonucleoside 5'-phosphate + diphosphate + H(+). It carries out the reaction a 2'-deoxyribonucleoside 5'-triphosphate + H2O = a 2'-deoxyribonucleoside 5'-phosphate + diphosphate + H(+). Nucleoside triphosphate pyrophosphatase. May have a dual role in cell division arrest and in preventing the incorporation of modified nucleotides into cellular nucleic acids. The sequence is that of Nucleoside triphosphate pyrophosphatase from Ehrlichia ruminantium (strain Gardel).